The sequence spans 424 residues: Hemagglutinin-esterase (424 aa).

The N-terminal stretch at 1–16 is a signal peptide; the sequence is MFLLPRFCLVCSIIGT. The interval 7-127 is esterase domain 1; that stretch reads FCLVCSIIGT…NNDIWMQNKG (121 aa). The Virion surface portion of the chain corresponds to 17-392; that stretch reads FGFENPPTNV…PICVYDPLPI (376 aa). The active-site Nucleophile is the Ser-40. Cys-44 and Cys-65 are disulfide-bonded. N-linked (GlcNAc...) asparagine; by host glycans are attached at residues Asn-54, Asn-89, Asn-153, Asn-236, and Asn-301. Disulfide bonds link Cys-113-Cys-162, Cys-197-Cys-276, and Cys-205-Cys-249. Residues 128 to 266 are receptor binding; sequence LFYTQVYKKM…GNYLAISNEL (139 aa). Positions 267–379 are esterase domain 2; the sequence is LLTVPTKAIC…NCPTAASIIS (113 aa). A disulfide bond links Cys-307 and Cys-312. N-linked (GlcNAc...) asparagine; by host glycosylation occurs at Asn-316. Residues Asp-326 and His-329 each act as charge relay system in the active site. A disulfide bridge links Cys-347 with Cys-371. Asn-358 is a glycosylation site (N-linked (GlcNAc...) asparagine; by host). Residues 393–413 form a helical membrane-spanning segment; sequence ILLGILLGVAVIVIVVLLLYF. Topologically, residues 414 to 424 are intravirion; the sequence is MVDNGIRQHYA.

It belongs to the influenza type C/coronaviruses hemagglutinin-esterase family. As to quaternary structure, homodimer; disulfide-linked. Forms a complex with the M protein in the pre-Golgi. Associates then with S-M complex to form a ternary complex S-M-HE. Post-translationally, N-glycosylated in the host RER.

The protein localises to the virion membrane. It is found in the host cell membrane. It catalyses the reaction N-acetyl-9-O-acetylneuraminate + H2O = N-acetylneuraminate + acetate + H(+). The enzyme catalyses N-acetyl-4-O-acetylneuraminate + H2O = N-acetylneuraminate + acetate + H(+). Its function is as follows. Structural protein that makes short spikes at the surface of the virus. Contains receptor binding and receptor-destroying activities. Mediates de-O-acetylation of N-acetyl-4-O-acetylneuraminic acid, which is probably the receptor determinant recognized by the virus on the surface of erythrocytes and susceptible cells. This receptor-destroying activity is important for virus release as it probably helps preventing self-aggregation and ensures the efficient spread of the progeny virus from cell to cell. May serve as a secondary viral attachment protein for initiating infection, the spike protein being the major one. May become a target for both the humoral and the cellular branches of the immune system. This chain is Hemagglutinin-esterase, found in Sus scrofa (Pig).